Consider the following 204-residue polypeptide: NADH-quinone oxidoreductase subunit C (204 aa).

It belongs to the complex I 30 kDa subunit family. NDH-1 is composed of 14 different subunits. Subunits NuoB, C, D, E, F, and G constitute the peripheral sector of the complex.

It is found in the cell inner membrane. It catalyses the reaction a quinone + NADH + 5 H(+)(in) = a quinol + NAD(+) + 4 H(+)(out). Its function is as follows. NDH-1 shuttles electrons from NADH, via FMN and iron-sulfur (Fe-S) centers, to quinones in the respiratory chain. The immediate electron acceptor for the enzyme in this species is believed to be ubiquinone. Couples the redox reaction to proton translocation (for every two electrons transferred, four hydrogen ions are translocated across the cytoplasmic membrane), and thus conserves the redox energy in a proton gradient. The sequence is that of NADH-quinone oxidoreductase subunit C from Rhodopseudomonas palustris (strain ATCC BAA-98 / CGA009).